The following is a 157-amino-acid chain: Ribosomal RNA large subunit methyltransferase H (157 aa).

Residues Leu-73, Gly-105, and 124–129 (LSLMTF) each bind S-adenosyl-L-methionine.

Belongs to the RNA methyltransferase RlmH family. Homodimer.

The protein resides in the cytoplasm. It catalyses the reaction pseudouridine(1915) in 23S rRNA + S-adenosyl-L-methionine = N(3)-methylpseudouridine(1915) in 23S rRNA + S-adenosyl-L-homocysteine + H(+). Its function is as follows. Specifically methylates the pseudouridine at position 1915 (m3Psi1915) in 23S rRNA. The polypeptide is Ribosomal RNA large subunit methyltransferase H (Flavobacterium johnsoniae (strain ATCC 17061 / DSM 2064 / JCM 8514 / BCRC 14874 / CCUG 350202 / NBRC 14942 / NCIMB 11054 / UW101) (Cytophaga johnsonae)).